A 795-amino-acid polypeptide reads, in one-letter code: Cyclin-dependent kinase 11B (795 aa).

Basic and acidic residues predominate over residues 17–60 (LQEKKRRKEQEEKAEIKRLKNSDDRDSKRDSLEEGELRDHRMEI). The interval 17–412 (LQEKKRRKEQ…EGDYVPDSPA (396 aa)) is disordered. Ser-47 and Ser-72 each carry phosphoserine. Basic residues predominate over residues 95-113 (EKAHHRKDEKRKEKRRHRS). 4 stretches are compositionally biased toward basic and acidic residues: residues 114 to 131 (HSAEGGKHARVKEKEREH), 138 to 227 (REEQ…DKVK), 238 to 253 (PPRERFELGDGRKPGE), and 264 to 276 (QLKEEKMEERDLL). A Phosphoserine modification is found at Ser-115. The residue at position 283 (Ser-283) is a Phosphoserine. The span at 291 to 302 (SAESSSAESGSG) shows a compositional bias: low complexity. 2 stretches are compositionally biased toward acidic residues: residues 303-364 (SEEE…EERE) and 383-392 (ESEEAEEEVG). One can recognise a Protein kinase domain in the interval 438–723 (FQCLNRIEEG…AEDGLKHEYF (286 aa)). ATP is bound by residues 444-452 (IEEGTYGVV) and Lys-467. Ser-482 is subject to Phosphoserine; by CDK7. Thr-488 is modified (phosphothreonine; by CDK7). The Proton acceptor role is filled by Asp-562. Ser-589 carries the phosphoserine modification. Residue Tyr-594 is modified to Phosphotyrosine. Thr-595 bears the Phosphothreonine mark. Residue Lys-641 forms a Glycyl lysine isopeptide (Lys-Gly) (interchain with G-Cter in SUMO2) linkage. The interval 733 to 795 (SMFPTWPAKS…AAGPGFSLKF (63 aa)) is disordered. At Thr-751 the chain carries Phosphothreonine. At Ser-752 the chain carries Phosphoserine.

Belongs to the protein kinase superfamily. CMGC Ser/Thr protein kinase family. CDC2/CDKX subfamily. As to quaternary structure, cleaved isoform SV9 (p110C) binds to the serine/threonine kinase PAK1 and RANBP9. p110C interacts with RNPS1. Isoform 7, but not isoform SV9, nor its cleavage product p110C, interacts with CCND3. Interacts with CCNL1 and CCNL2. Forms complexes with pre-mRNA-splicing factors, including at least SRSF1, SRSF2 and SRSF7/SLU7. Interacts with isoform 5 of MYO18A. (Microbial infection) Interacts with human herpes virus 1 (HHV-1) transcriptional regulator ICP22. It depends on Mg(2+) as a cofactor. During FAS- or TNF-induced apoptosis, isoform SV9 is cleaved by caspases to produce p110C, a fragment that contains the C-terminal kinase domain. Post-translationally, phosphorylation at Ser-115 creates a binding site for 14-3-3 proteins. p110C can be autophosphorylated. As to expression, expressed ubiquitously. Some evidence of isoform-specific tissue distribution.

Its subcellular location is the cytoplasm. It is found in the nucleus. The catalysed reaction is L-seryl-[protein] + ATP = O-phospho-L-seryl-[protein] + ADP + H(+). It carries out the reaction L-threonyl-[protein] + ATP = O-phospho-L-threonyl-[protein] + ADP + H(+). Its activity is regulated as follows. Phosphorylation at Thr-448 or Tyr-449 inactivates the enzyme, while phosphorylation at Thr-595 activates it. Functionally, plays multiple roles in cell cycle progression, cytokinesis and apoptosis. Involved in pre-mRNA splicing in a kinase activity-dependent manner. Isoform 7 may act as a negative regulator of normal cell cycle progression. This chain is Cyclin-dependent kinase 11B (CDK11B), found in Homo sapiens (Human).